A 148-amino-acid polypeptide reads, in one-letter code: Lysozyme-like protein 6 (148 aa).

Positions 1-19 (MLKALFICVASCLLVVNDG) are cleaved as a signal peptide. A C-type lysozyme domain is found at 20 to 148 (NIIHRCSLAK…SYWMTGCHLG (129 aa)). Intrachain disulfides connect Cys25-Cys145, Cys49-Cys133, Cys83-Cys98, and Cys94-Cys112. The active site involves Glu54. N-linked (GlcNAc...) asparagine glycosylation is present at Asn58. Asp71 is an active-site residue.

This sequence belongs to the glycosyl hydrolase 22 family. In terms of assembly, monomer. Expressed strongly in testis and epididymis and weakly in seminal vesicle, vas deferens, kidney and spleen. Highly expressed in primary spermatocytes and round spermatids (at protein level).

Its subcellular location is the secreted. The protein resides in the cell surface. It is found in the cell projection. The protein localises to the cilium. It localises to the flagellum. It carries out the reaction Hydrolysis of (1-&gt;4)-beta-linkages between N-acetylmuramic acid and N-acetyl-D-glucosamine residues in a peptidoglycan and between N-acetyl-D-glucosamine residues in chitodextrins.. Functionally, may be involved sperm-egg plasma membrane adhesion and fusion during fertilization. Exhibits bacteriolytic activity in vitro against Micrococcus luteus and Staphylococcus aureus. Shows weak bacteriolytic activity against Gram-positive bacteria at physiological pH. Bacteriolytic activity is pH-dependent, with a maximum at around pH 5.6. The protein is Lysozyme-like protein 6 (Lyzl6) of Mus musculus (Mouse).